The primary structure comprises 205 residues: Large ribosomal subunit protein uL4 (205 aa).

The interval 48–79 is disordered; sequence KAQKSRSDVSGGGKKPWKQKGSGHARAGTTRS.

Belongs to the universal ribosomal protein uL4 family. Part of the 50S ribosomal subunit.

Its function is as follows. One of the primary rRNA binding proteins, this protein initially binds near the 5'-end of the 23S rRNA. It is important during the early stages of 50S assembly. It makes multiple contacts with different domains of the 23S rRNA in the assembled 50S subunit and ribosome. In terms of biological role, forms part of the polypeptide exit tunnel. This Methylococcus capsulatus (strain ATCC 33009 / NCIMB 11132 / Bath) protein is Large ribosomal subunit protein uL4.